Reading from the N-terminus, the 814-residue chain is Echinoderm microtubule-associated protein-like 1 (814 aa).

A coiled-coil region spans residues 31 to 72 (SMEISDRIASLEQRVQMQEDDIQLLKSALADVVRRLNITEEQ). The interval 77–185 (NRKGPTKARP…EPTFSPEEGY (109 aa)) is disordered. Residues 92-101 (PLRTTVNNGT) show a composition bias toward polar residues. The segment covering 103-115 (LPKKPSASLPSPS) has biased composition (low complexity). Phosphoserine is present on Ser-113. Over residues 127–137 (KSINRTSSSER) the composition is skewed to polar residues. Residues 142-152 (GRRESSGDSKG) are compositionally biased toward basic and acidic residues. Positions 155–167 (NRTGSTSSSSSGK) are enriched in low complexity. Positions 175 to 814 (KEPTFSPEEG…DTSIMQWRVI (640 aa)) are tandem atypical propeller in EMLs. WD repeat units lie at residues 260–309 (EQLQ…IWDS), 314–357 (TLHV…VWDW), 362–399 (RLAD…FWTL), 408–445 (QGLF…VWGK), 449–488 (RISY…SWNG), 492–529 (KLHK…LQGT), 534–571 (FTPI…LWDA), 577–612 (VWDK…VFDT), 616–654 (DLVT…IYGV), 663–700 (RVGK…YWVP), 708–767 (SVET…LFSY), and 774–813 (APSH…QWRV).

The protein belongs to the WD repeat EMAP family. Homotrimer; self-association is mediated by the N-terminal coiled coil. Does not interact with EML3. Binds repolymerizing microtubules. Binds unpolymerized tubulins via its WD repeat region. Interacts with TASOR.

It is found in the cytoplasm. It localises to the perinuclear region. The protein localises to the cytoskeleton. Modulates the assembly and organization of the microtubule cytoskeleton, and probably plays a role in regulating the orientation of the mitotic spindle and the orientation of the plane of cell division. Required for normal proliferation of neuronal progenitor cells in the developing brain and for normal brain development. Does not affect neuron migration per se. This chain is Echinoderm microtubule-associated protein-like 1 (Eml1), found in Rattus norvegicus (Rat).